The sequence spans 252 residues: Imidazole glycerol phosphate synthase subunit HisF (252 aa).

Residues aspartate 11 and aspartate 130 contribute to the active site.

The protein belongs to the HisA/HisF family. Heterodimer of HisH and HisF.

The protein resides in the cytoplasm. It catalyses the reaction 5-[(5-phospho-1-deoxy-D-ribulos-1-ylimino)methylamino]-1-(5-phospho-beta-D-ribosyl)imidazole-4-carboxamide + L-glutamine = D-erythro-1-(imidazol-4-yl)glycerol 3-phosphate + 5-amino-1-(5-phospho-beta-D-ribosyl)imidazole-4-carboxamide + L-glutamate + H(+). It functions in the pathway amino-acid biosynthesis; L-histidine biosynthesis; L-histidine from 5-phospho-alpha-D-ribose 1-diphosphate: step 5/9. In terms of biological role, IGPS catalyzes the conversion of PRFAR and glutamine to IGP, AICAR and glutamate. The HisF subunit catalyzes the cyclization activity that produces IGP and AICAR from PRFAR using the ammonia provided by the HisH subunit. The protein is Imidazole glycerol phosphate synthase subunit HisF of Aromatoleum aromaticum (strain DSM 19018 / LMG 30748 / EbN1) (Azoarcus sp. (strain EbN1)).